The chain runs to 508 residues: MKLAYWMYAGPAHIGTLRVASSFKNVHGIMHAPLGDDYFNVMRSMLERERNFTPVTASVVDRHVLARGSQEKVVDNITRKDEEENPDLIVLTPTCTSSILQEDLENFVERASLSTQGDVLLADVNHYRVNELQAADRTLDQIVQFYIQKARKNGDLLEEKTAKPSVNIIGVSTLGFHNQHDCTELKRLMADLGIEVNEVIPEGASVHNLKRLPQAWFNLIPYREIGHMSAHYLEKEFGMPFVDITPMGVVETARCIRKIQEVLNAQGADVNYEEYIENQTLHVSQAAWFSRSIDCQNLTGKKAVVYGDNTHAAAMTKILAREMGIHVVWAGTYCKYDQEWFRKEVSEYCDEVLINEDHGAIGDAIARVEPSAIFGTQMERHVGKRLNIPCGVIAAPIHIQDFPIGYKPFLGYEGTNQVADLVYNSFTLGMEDHLLEIFGGHDTKEVITKGISADSDLGWSADGQAELNKIPGFVRGKVKRNTEKFARERNITEITAEVLYAAKEAVGA.

Residue Asp-36 coordinates [4Fe-4S] cluster. Asp-294 serves as the catalytic Proton donor. Substrate is bound at residue 429 to 430; that stretch reads GM.

This sequence belongs to the ChlB/BchB/BchZ family. Protochlorophyllide reductase is composed of three subunits; ChlL, ChlN and ChlB. Forms a heterotetramer of two ChlB and two ChlN subunits. The cofactor is [4Fe-4S] cluster.

It carries out the reaction chlorophyllide a + oxidized 2[4Fe-4S]-[ferredoxin] + 2 ADP + 2 phosphate = protochlorophyllide a + reduced 2[4Fe-4S]-[ferredoxin] + 2 ATP + 2 H2O. It participates in porphyrin-containing compound metabolism; chlorophyll biosynthesis (light-independent). In terms of biological role, component of the dark-operative protochlorophyllide reductase (DPOR) that uses Mg-ATP and reduced ferredoxin to reduce ring D of protochlorophyllide (Pchlide) to form chlorophyllide a (Chlide). This reaction is light-independent. The NB-protein (ChlN-ChlB) is the catalytic component of the complex. The sequence is that of Light-independent protochlorophyllide reductase subunit B from Acaryochloris marina (strain MBIC 11017).